Reading from the N-terminus, the 418-residue chain is MAP kinase-interacting serine/threonine-protein kinase 1 (418 aa).

Positions 1-23 are disordered; that stretch reads MVSSQPVPFDDGGKRRKKKRKTR. One can recognise a Protein kinase domain in the interval 37-321; it reads RLTDELLGEG…AFQVLQHPWL (285 aa). ATP is bound by residues 43–51 and K66; that span reads LGEGAYAKV. D158 functions as the Proton acceptor in the catalytic mechanism. A disordered region spans residues 384-418; it reads PPSKSRLAKRRAQAHARKGGSHPTHSTVTASQGTP. Positions 389-403 are enriched in basic residues; it reads RLAKRRAQAHARKGG. A compositionally biased stretch (polar residues) spans 406-418; it reads PTHSTVTASQGTP.

Belongs to the protein kinase superfamily. CAMK Ser/Thr protein kinase family. Mg(2+) serves as cofactor.

It carries out the reaction L-seryl-[protein] + ATP = O-phospho-L-seryl-[protein] + ADP + H(+). It catalyses the reaction L-threonyl-[protein] + ATP = O-phospho-L-threonyl-[protein] + ADP + H(+). May play a role in the response to environmental stress and cytokines. Appears to regulate translation by phosphorylating EIF4E, thus increasing the affinity of this protein for the 7-methylguanosine-containing mRNA cap. In Xenopus laevis (African clawed frog), this protein is MAP kinase-interacting serine/threonine-protein kinase 1 (mknk1).